The chain runs to 204 residues: Cold and drought-regulated protein CORA (204 aa).

18 tandem repeats follow at residues 54-59 (YNHGGG), 65-70 (YNHGGG), 71-76 (YNHGGG), 78-83 (YHNGGG), 85-90 (YNHGGG), 98-100 (HGG), 101-103 (HGG), 112-114 (HGG), 115-117 (HGG), 126-128 (HGG), 129-131 (HGG), 164-169 (YNHGGG), 171-176 (YNHGGG), 178-180 (HGG), 181-183 (HGG), 184-186 (HGG), 187-189 (HGG), and 190-192 (HGG). Residues 54-176 (YNHGGGYNGG…GGGGYNHGGG (123 aa)) are 7 X 6 AA repeats of Y-N-H-G-G-G. The interval 98–192 (HGGHGGGGYN…GHGGHGGHGG (95 aa)) is 11 X 3 AA repeats of H-G-G. A compositionally biased stretch (gly residues) spans 169–194 (GGYNHGGGGHGGHGGHGGHGGHGGHG). The segment at 169-204 (GGYNHGGGGHGGHGGHGGHGGHGGHGAVQTEDNTQN) is disordered.

It belongs to the GRP family.

Its function is as follows. May be involved in resistance of the plant to environmental stress. The protein is Cold and drought-regulated protein CORA (CORA) of Medicago sativa (Alfalfa).